The following is a 404-amino-acid chain: Acetylornithine aminotransferase (404 aa).

Residues 113-114 (GT) and phenylalanine 139 each bind pyridoxal 5'-phosphate. Arginine 142 is a binding site for N(2)-acetyl-L-ornithine. A pyridoxal 5'-phosphate-binding site is contributed by 224-227 (DEVQ). Lysine 253 carries the N6-(pyridoxal phosphate)lysine modification. Serine 281 lines the N(2)-acetyl-L-ornithine pocket. Position 282 (threonine 282) interacts with pyridoxal 5'-phosphate.

This sequence belongs to the class-III pyridoxal-phosphate-dependent aminotransferase family. ArgD subfamily. In terms of assembly, homodimer. Pyridoxal 5'-phosphate serves as cofactor.

It is found in the cytoplasm. It catalyses the reaction N(2)-acetyl-L-ornithine + 2-oxoglutarate = N-acetyl-L-glutamate 5-semialdehyde + L-glutamate. The protein operates within amino-acid biosynthesis; L-arginine biosynthesis; N(2)-acetyl-L-ornithine from L-glutamate: step 4/4. This is Acetylornithine aminotransferase from Mycobacterium leprae (strain TN).